An 81-amino-acid polypeptide reads, in one-letter code: RNA-binding protein Hfq (81 aa).

The 61-residue stretch at Asp-11 to Ile-71 folds into the Sm domain.

It belongs to the Hfq family. Homohexamer.

Functionally, RNA chaperone that binds small regulatory RNA (sRNAs) and mRNAs to facilitate mRNA translational regulation in response to envelope stress, environmental stress and changes in metabolite concentrations. Also binds with high specificity to tRNAs. This chain is RNA-binding protein Hfq, found in Clostridium acetobutylicum (strain ATCC 824 / DSM 792 / JCM 1419 / IAM 19013 / LMG 5710 / NBRC 13948 / NRRL B-527 / VKM B-1787 / 2291 / W).